The chain runs to 169 residues: Cell division inhibitor SulA (169 aa).

The interval 106–112 (ALRTGNY) is ftsZ binding. Residues 162–169 (KIHSNLYH) are lon protease binding.

It belongs to the SulA family. Interacts with FtsZ. Is rapidly cleaved and degraded by the Lon protease once DNA damage is repaired.

Component of the SOS system and an inhibitor of cell division. Accumulation of SulA causes rapid cessation of cell division and the appearance of long, non-septate filaments. In the presence of GTP, binds a polymerization-competent form of FtsZ in a 1:1 ratio, thus inhibiting FtsZ polymerization and therefore preventing it from participating in the assembly of the Z ring. This mechanism prevents the premature segregation of damaged DNA to daughter cells during cell division. The polypeptide is Cell division inhibitor SulA (Salmonella dublin (strain CT_02021853)).